The sequence spans 55 residues: Large ribosomal subunit protein bL33B (55 aa).

Belongs to the bacterial ribosomal protein bL33 family.

The chain is Large ribosomal subunit protein bL33B from Mycobacteroides abscessus (strain ATCC 19977 / DSM 44196 / CCUG 20993 / CIP 104536 / JCM 13569 / NCTC 13031 / TMC 1543 / L948) (Mycobacterium abscessus).